Reading from the N-terminus, the 78-residue chain is Large ribosomal subunit protein uL23 (78 aa).

It belongs to the universal ribosomal protein uL23 family. In terms of assembly, part of the 50S ribosomal subunit. Contacts protein L29.

Binds to 23S rRNA. One of the proteins that surrounds the polypeptide exit tunnel on the outside of the ribosome. This Nanoarchaeum equitans (strain Kin4-M) protein is Large ribosomal subunit protein uL23.